The sequence spans 150 residues: Endoribonuclease YbeY (150 aa).

The Zn(2+) site is built by His-102, His-106, and His-112.

It belongs to the endoribonuclease YbeY family. It depends on Zn(2+) as a cofactor.

The protein localises to the cytoplasm. Single strand-specific metallo-endoribonuclease involved in late-stage 70S ribosome quality control and in maturation of the 3' terminus of the 16S rRNA. This chain is Endoribonuclease YbeY, found in Thermotoga petrophila (strain ATCC BAA-488 / DSM 13995 / JCM 10881 / RKU-1).